The sequence spans 207 residues: 8-oxoguanine DNA glycosylase/AP lyase (207 aa).

Catalysis depends on residues K128 and D146.

This sequence belongs to the type-2 OGG1 family.

The enzyme catalyses 2'-deoxyribonucleotide-(2'-deoxyribose 5'-phosphate)-2'-deoxyribonucleotide-DNA = a 3'-end 2'-deoxyribonucleotide-(2,3-dehydro-2,3-deoxyribose 5'-phosphate)-DNA + a 5'-end 5'-phospho-2'-deoxyribonucleoside-DNA + H(+). Its function is as follows. Catalyzes the excision of an oxidatively damaged form of guanine (7,8-dihydro-8-oxoguanine = 8-oxoG) from DNA. Also cleaves the DNA backbone at apurinic/apyrimidinic sites (AP sites). The chain is 8-oxoguanine DNA glycosylase/AP lyase from Saccharolobus islandicus (strain Y.N.15.51 / Yellowstone #2) (Sulfolobus islandicus).